The following is a 474-amino-acid chain: Gamma-aminobutyric acid receptor subunit beta-2 (474 aa).

The signal sequence occupies residues 1-25; that stretch reads MWRVRKRGYFGIWSFPLIIAAVCAQ. Topologically, residues 26-244 are extracellular; that stretch reads SVNDPSNMSL…SFKLKRNIGY (219 aa). 2 N-linked (GlcNAc...) asparagine glycosylation sites follow: Asn-32 and Asn-104. Tyr-121 provides a ligand contact to histamine. Cys-160 and Cys-174 form a disulfide bridge. Asn-173 carries N-linked (GlcNAc...) asparagine glycosylation. Histamine-binding positions include 180-181 and Thr-226; that span reads SY. 4-aminobutanoate is bound by residues Tyr-181 and Thr-226. 3 helical membrane passes run 245-266, 270-292, and 304-326; these read FILQ…SFWI, ASAA…NTHL, and AIDM…YALV. Over 327 to 451 the chain is Cytoplasmic; that stretch reads NYIFFGRGPQ…DLTDVNAIDR (125 aa). Tyr-403 is subject to Phosphotyrosine. A helical membrane pass occupies residues 452–473; that stretch reads WSRIFFPVVFSFFNIVYWLYYV.

This sequence belongs to the ligand-gated ion channel (TC 1.A.9) family. Gamma-aminobutyric acid receptor (TC 1.A.9.5) subfamily. GABRB2 sub-subfamily. As to quaternary structure, heteropentamer, formed by a combination of alpha (GABRA1-6), beta (GABRB1-3), gamma (GABRG1-3), delta (GABRD), epsilon (GABRE), rho (GABRR1-3), pi (GABRP) and theta (GABRQ) chains, each subunit exhibiting distinct physiological and pharmacological properties. Interacts with UBQLN1. May interact with KIF21B. Identified in a complex of 720 kDa composed of LHFPL4, NLGN2, GABRA1, GABRB2, GABRG2 and GABRB3. In terms of processing, glycosylated. In terms of tissue distribution, expressed in brain (at protein level), in cerebellar granule cells. Expressed in lungs, in alveolar epithelium.

It is found in the postsynaptic cell membrane. Its subcellular location is the cell membrane. It localises to the cytoplasmic vesicle membrane. It catalyses the reaction chloride(in) = chloride(out). Allosterically activated by benzodiazepines and the anesthetic etomidate. Inhibited by the antagonist bicuculline. Potentiated by histamine. Functionally, beta subunit of the heteropentameric ligand-gated chloride channel gated by gamma-aminobutyric acid (GABA), a major inhibitory neurotransmitter in the brain. GABA-gated chloride channels, also named GABA(A) receptors (GABAAR), consist of five subunits arranged around a central pore and contain GABA active binding site(s) located at the alpha and beta subunit interface(s). When activated by GABA, GABAARs selectively allow the flow of chloride anions across the cell membrane down their electrochemical gradient. Chloride influx into the postsynaptic neuron following GABAAR opening decreases the neuron ability to generate a new action potential, thereby reducing nerve transmission. GABAARs containing alpha-1 and beta-2 or -3 subunits exhibit synaptogenic activity; the gamma-2 subunit being necessary but not sufficient to induce rapid synaptic contacts formation. Extrasynaptic beta-2 receptors contribute to the tonic GABAergic inhibition. Beta-containing GABAARs can simultaneously bind GABA and histamine where histamine binds at the interface of two neighboring beta subunits, which may be involved in the regulation of sleep and wakefulness. The polypeptide is Gamma-aminobutyric acid receptor subunit beta-2 (Rattus norvegicus (Rat)).